The sequence spans 91 residues: Cell division topological specificity factor (91 aa).

The protein belongs to the MinE family.

Prevents the cell division inhibition by proteins MinC and MinD at internal division sites while permitting inhibition at polar sites. This ensures cell division at the proper site by restricting the formation of a division septum at the midpoint of the long axis of the cell. This chain is Cell division topological specificity factor, found in Desulfitobacterium hafniense (strain DSM 10664 / DCB-2).